Here is a 136-residue protein sequence, read N- to C-terminus: Succinate dehydrogenase assembly factor 3, mitochondrial (136 aa).

The transit peptide at 1 to 24 (MRASMVRRMAAAASSSASSSLRPA) directs the protein to the mitochondrion.

This sequence belongs to the complex I LYR family. SDHAF3 subfamily. In terms of assembly, interacts with the iron-sulfur protein subunit within the SDH catalytic dimer.

The protein resides in the mitochondrion matrix. Functionally, plays an essential role in the assembly of succinate dehydrogenase (SDH), an enzyme complex (also referred to as respiratory complex II) that is a component of both the tricarboxylic acid (TCA) cycle and the mitochondrial electron transport chain, and which couples the oxidation of succinate to fumarate with the reduction of ubiquinone (coenzyme Q) to ubiquinol. Promotes maturation of the iron-sulfur protein subunit of the SDH catalytic dimer, protecting it from the deleterious effects of oxidants. May act together with SDHAF1. This Pyricularia oryzae (strain 70-15 / ATCC MYA-4617 / FGSC 8958) (Rice blast fungus) protein is Succinate dehydrogenase assembly factor 3, mitochondrial.